Consider the following 304-residue polypeptide: MTLRQAIDLAAALLAEAGVDSARCDAEQLAAHLAGTDRGRLPLFEPPGDEFFGRYRDIVTARARRVPLQHLIGTVSFGPVVLHVGPGVFVPRPETEAILAWATAQSLPARPLIVDACTGSGALAVALAQHRANLGLKARIIGIDDSDCALDYARRNAAGTPVELVRADVTTPCLLPELDGQVDLMVSNPPYIPDAAVLEPEVAQHDPHHALFGGPDGMTVISAVVGLAGRWLRPGGLFAVEHDDTTSSSTVDLVSSTKLFVDVQARKDLAGRPRFVTAMRWGHLPLAGENGAIDPRQRRCRAKR.

Residues Asp144 and Asn188 each contribute to the S-adenosyl-L-methionine site. 188 to 191 (NPPY) provides a ligand contact to substrate.

Belongs to the protein N5-glutamine methyltransferase family. PrmC subfamily.

It carries out the reaction L-glutaminyl-[peptide chain release factor] + S-adenosyl-L-methionine = N(5)-methyl-L-glutaminyl-[peptide chain release factor] + S-adenosyl-L-homocysteine + H(+). Methylates the class 1 translation termination release factors RF1/PrfA and RF2/PrfB on the glutamine residue of the universally conserved GGQ motif. The sequence is that of Release factor glutamine methyltransferase from Mycobacterium tuberculosis (strain CDC 1551 / Oshkosh).